Here is a 119-residue protein sequence, read N- to C-terminus: Large ribosomal subunit protein bL20 (119 aa).

The protein belongs to the bacterial ribosomal protein bL20 family.

Its function is as follows. Binds directly to 23S ribosomal RNA and is necessary for the in vitro assembly process of the 50S ribosomal subunit. It is not involved in the protein synthesizing functions of that subunit. This chain is Large ribosomal subunit protein bL20, found in Xanthomonas campestris pv. campestris (strain 8004).